The following is a 99-amino-acid chain: Nucleoid-associated protein EbfC (99 aa).

It belongs to the YbaB/EbfC family. Homodimer. Can form tetramers and octamers in solution.

Its subcellular location is the cytoplasm. The protein resides in the nucleoid. In terms of biological role, binds to DNA and alters its conformation. May be involved in global regulation of gene expression. Binds specifically and non-specifically to DNA, preferentially to the 4 bp broken palindrome 5'-GTnAC-3'. Affects expression of a wide variety of genes, encoding both structural and metabolic proteins. In Borreliella burgdorferi (strain ATCC 35210 / DSM 4680 / CIP 102532 / B31) (Borrelia burgdorferi), this protein is Nucleoid-associated protein EbfC.